Here is a 343-residue protein sequence, read N- to C-terminus: UDP-3-O-acylglucosamine N-acyltransferase (343 aa).

His245 functions as the Proton acceptor in the catalytic mechanism.

It belongs to the transferase hexapeptide repeat family. LpxD subfamily. In terms of assembly, homotrimer.

The catalysed reaction is a UDP-3-O-[(3R)-3-hydroxyacyl]-alpha-D-glucosamine + a (3R)-hydroxyacyl-[ACP] = a UDP-2-N,3-O-bis[(3R)-3-hydroxyacyl]-alpha-D-glucosamine + holo-[ACP] + H(+). It functions in the pathway bacterial outer membrane biogenesis; LPS lipid A biosynthesis. Functionally, catalyzes the N-acylation of UDP-3-O-acylglucosamine using 3-hydroxyacyl-ACP as the acyl donor. Is involved in the biosynthesis of lipid A, a phosphorylated glycolipid that anchors the lipopolysaccharide to the outer membrane of the cell. In Phenylobacterium zucineum (strain HLK1), this protein is UDP-3-O-acylglucosamine N-acyltransferase.